The chain runs to 93 residues: Early nodulin-12A (93 aa).

An N-terminal signal peptide occupies residues 1-24 (MASFLLSILVFFLSALVLVPQGFA). The disordered stretch occupies residues 30–93 (PAYRPPQTEP…HPPSEDNIHF (64 aa)). Tandem repeats lie at residues 34-38 (PPQTE), 39-43 (PPVHK), 44-48 (PPHKE), 49-53 (PPVHK), 54-58 (PPHKD), 59-63 (PPVNK), 64-68 (PPQKE), 69-73 (PPVHK), 74-78 (PPRKE), and 79-83 (PPTHR). The interval 34–83 (PPQTEPPVHKPPHKEPPVHKPPHKDPPVNKPPQKEPPVHKPPRKEPPTHR) is 10 X 5 AA tandem repeats of P-P-[HQVRT]-[HKNT]-[DEKR]. Basic and acidic residues predominate over residues 46-93 (HKEPPVHKPPHKDPPVNKPPQKEPPVHKPPRKEPPTHRHPPSEDNIHF).

This sequence belongs to the plant proline-rich protein superfamily. ENOD12 family. More abundant in the young nodules than the mature nodules.

The protein localises to the secreted. Its subcellular location is the cell wall. Involved in the infection process during the plant-rhizobium interaction. In Medicago sativa (Alfalfa), this protein is Early nodulin-12A (ENOD12A).